The chain runs to 226 residues: Adenylate kinase (226 aa).

Residue 12–17 participates in ATP binding; the sequence is GSGKGT. An NMP region spans residues 32–61; the sequence is ESGAIFREHIGGGTELGLKAKEYIERGDLV. Residues Ser-33, Arg-38, 59–61, 87–90, and Gln-94 each bind AMP; these read DLV and GFPR. Residues 128–171 are LID; it reads GRRLCVNDNNHPNHIAFEAIKPVEKDGKLVCRVCGGDLKTRPDD. Arg-129 contacts ATP. Residues Arg-168 and Arg-180 each coordinate AMP. Residue Ala-213 participates in ATP binding.

This sequence belongs to the adenylate kinase family. In terms of assembly, monomer.

The protein resides in the cytoplasm. It carries out the reaction AMP + ATP = 2 ADP. The protein operates within purine metabolism; AMP biosynthesis via salvage pathway; AMP from ADP: step 1/1. Catalyzes the reversible transfer of the terminal phosphate group between ATP and AMP. Plays an important role in cellular energy homeostasis and in adenine nucleotide metabolism. This chain is Adenylate kinase, found in Desulfotalea psychrophila (strain LSv54 / DSM 12343).